The primary structure comprises 242 residues: ATP-dependent dethiobiotin synthetase BioD (242 aa).

Glu-12 to Val-17 lines the ATP pocket. A Mg(2+)-binding site is contributed by Thr-16. Lys-37 is an active-site residue. A substrate-binding site is contributed by Ser-41. ATP contacts are provided by residues Asp-51 and Glu-112–Gly-115. The Mg(2+) site is built by Asp-51 and Glu-112.

Belongs to the dethiobiotin synthetase family. In terms of assembly, homodimer. It depends on Mg(2+) as a cofactor.

It localises to the cytoplasm. It carries out the reaction (7R,8S)-7,8-diammoniononanoate + CO2 + ATP = (4R,5S)-dethiobiotin + ADP + phosphate + 3 H(+). It participates in cofactor biosynthesis; biotin biosynthesis; biotin from 7,8-diaminononanoate: step 1/2. In terms of biological role, catalyzes a mechanistically unusual reaction, the ATP-dependent insertion of CO2 between the N7 and N8 nitrogen atoms of 7,8-diaminopelargonic acid (DAPA, also called 7,8-diammoniononanoate) to form a ureido ring. The sequence is that of ATP-dependent dethiobiotin synthetase BioD from Bacillus cereus (strain AH820).